Reading from the N-terminus, the 50-residue chain is Large ribosomal subunit protein bL33 (50 aa).

It belongs to the bacterial ribosomal protein bL33 family.

This Fusobacterium nucleatum subsp. nucleatum (strain ATCC 25586 / DSM 15643 / BCRC 10681 / CIP 101130 / JCM 8532 / KCTC 2640 / LMG 13131 / VPI 4355) protein is Large ribosomal subunit protein bL33.